A 119-amino-acid polypeptide reads, in one-letter code: C-C motif chemokine 24 (119 aa).

An N-terminal signal peptide occupies residues 1-26; that stretch reads MAGLATFVVSLLLVTLCAHCIDPAGS. Disulfide bonds link cysteine 33-cysteine 58 and cysteine 34-cysteine 74. Asparagine 54 and asparagine 115 each carry an N-linked (GlcNAc...) asparagine glycan.

The protein belongs to the intercrine beta (chemokine CC) family.

The protein resides in the secreted. In terms of biological role, chemotactic for resting T-lymphocytes, and eosinophils. Has lower chemotactic activity for neutrophils but none for monocytes and activated lymphocytes. Is a strong suppressor of colony formation by a multipotential hematopoietic progenitor cell line. Binds to CCR3. This is C-C motif chemokine 24 from Canis lupus familiaris (Dog).